The primary structure comprises 325 residues: Dimethylallyltranstransferase (325 aa).

Isopentenyl diphosphate contacts are provided by Arg54 and His84. The Mg(2+) site is built by Asp91 and Asp95. Positions 91–95 (DRVVD) match the DDXXD motif motif. Isopentenyl diphosphate is bound at residue Arg101. Positions 217–221 (RDIIA) match the DDXXD motif motif.

The protein belongs to the FPP/GGPP synthase family. Mg(2+) is required as a cofactor.

It catalyses the reaction isopentenyl diphosphate + dimethylallyl diphosphate = (2E)-geranyl diphosphate + diphosphate. It participates in isoprenoid biosynthesis; geranyl diphosphate biosynthesis; geranyl diphosphate from dimethylallyl diphosphate and isopentenyl diphosphate: step 1/1. In terms of biological role, catalyzes the addition of isopentenyl diphosphate (IPP) onto dimethylallyl diphosphate (DMAPP) to form geranyl pyrophosphate (GPP). Is probably involved in the biosynthesis of decaprenyl diphosphate, which is required for mycobacterial cell wall synthesis. Could be required for host endothelial-cell invasion and/or intracellular survival. This chain is Dimethylallyltranstransferase, found in Mycobacterium tuberculosis (strain ATCC 25618 / H37Rv).